We begin with the raw amino-acid sequence, 86 residues long: Small ribosomal subunit protein bS20 (86 aa).

This sequence belongs to the bacterial ribosomal protein bS20 family.

In terms of biological role, binds directly to 16S ribosomal RNA. This Sulfurimonas denitrificans (strain ATCC 33889 / DSM 1251) (Thiomicrospira denitrificans (strain ATCC 33889 / DSM 1251)) protein is Small ribosomal subunit protein bS20.